The primary structure comprises 89 residues: Small ribosomal subunit protein uS15 (89 aa).

The tract at residues 1 to 23 (MSLDTTEKQQLINANQTHGTDTG) is disordered. Residues 8–23 (KQQLINANQTHGTDTG) show a composition bias toward polar residues.

It belongs to the universal ribosomal protein uS15 family. In terms of assembly, part of the 30S ribosomal subunit. Forms a bridge to the 50S subunit in the 70S ribosome, contacting the 23S rRNA.

Its function is as follows. One of the primary rRNA binding proteins, it binds directly to 16S rRNA where it helps nucleate assembly of the platform of the 30S subunit by binding and bridging several RNA helices of the 16S rRNA. In terms of biological role, forms an intersubunit bridge (bridge B4) with the 23S rRNA of the 50S subunit in the ribosome. In Prochlorococcus marinus (strain MIT 9313), this protein is Small ribosomal subunit protein uS15.